We begin with the raw amino-acid sequence, 416 residues long: MKHRPVHERQSSTESKNLKETTQLIMQSSSDHTHHQLGSNDSPSACMSLPVPQLSAEGSCTVGDVTVDLSSQDSQHVARSNSRRVRPSTHGRSPSRHGHTHSHDASGPEDANDDSREQSNSISEVFHLYKWLEKSFPYILIFSAKLVVQHITGISVGIGLLTTFLYANKCIVNQVFLRDKCSKLQCLWVLVFLLFSSFLLYYTFSSQALYYSLVFMNPSLGPLHFFDALWVVGITDFIGKFFFMGLKCIILLVPSFVMSHKSKGYWYMALEELAQCYCTLVSTPVWFRYLIDYGNLDSGAEWHFGILLALLYLILKILIIFGQRKTSSDCLRLFLSQPNYGTTATKRQCSEADGMCAICQAEFTKPIALICQHVFCEECISSWFNKEKTCPLCRTLISNHSHKWKDGATSLQLRIF.

Disordered regions lie at residues 1-50 (MKHR…MSLP) and 68-117 (DLSS…DSRE). Over residues 7-19 (HERQSSTESKNLK) the composition is skewed to basic and acidic residues. Composition is skewed to polar residues over residues 20 to 45 (ETTQLIMQSSSDHTHHQLGSNDSPSA) and 68 to 80 (DLSSQDSQHVARS). Residues 81 to 100 (NSRRVRPSTHGRSPSRHGHT) show a composition bias toward basic residues. The next 6 helical transmembrane spans lie at 146 to 166 (LVVQHITGISVGIGLLTTFLY), 184 to 204 (LQCLWVLVFLLFSSFLLYYTF), 214 to 234 (VFMNPSLGPLHFFDALWVVGI), 237 to 257 (FIGKFFFMGLKCIILLVPSFV), 265 to 287 (YWYMALEELAQCYCTLVSTPVWF), and 302 to 322 (WHFGILLALLYLILKILIIFG). The required for ubiquitin ligase activity and for protection against ER stress-induced cell death stretch occupies residues 349–400 (CSEADGMCAICQAEFTKPIALICQHVFCEECISSWFNKEKTCPLCRTLISNH). Residues 356-394 (CAICQAEFTKPIALICQHVFCEECISSWFNKEKTCPLCR) form an RING-type zinc finger.

Its subcellular location is the endoplasmic reticulum membrane. The enzyme catalyses S-ubiquitinyl-[E2 ubiquitin-conjugating enzyme]-L-cysteine + [acceptor protein]-L-lysine = [E2 ubiquitin-conjugating enzyme]-L-cysteine + N(6)-ubiquitinyl-[acceptor protein]-L-lysine.. Its pathway is protein modification; protein ubiquitination. In terms of biological role, E3 ubiquitin-protein ligase that acts in the endoplasmic reticulum (ER)-associated degradation (ERAD) pathway, which targets misfolded proteins that accumulate in the endoplasmic reticulum (ER) for ubiquitination and subsequent proteasome-mediated degradation. Protects cells from ER stress-induced apoptosis. The polypeptide is E3 ubiquitin-protein ligase RNFT1 (rnft1) (Xenopus laevis (African clawed frog)).